We begin with the raw amino-acid sequence, 163 residues long: Large ribosomal subunit protein uL10 (163 aa).

The protein belongs to the universal ribosomal protein uL10 family. As to quaternary structure, part of the ribosomal stalk of the 50S ribosomal subunit. The N-terminus interacts with L11 and the large rRNA to form the base of the stalk. The C-terminus forms an elongated spine to which L12 dimers bind in a sequential fashion forming a multimeric L10(L12)X complex.

Its function is as follows. Forms part of the ribosomal stalk, playing a central role in the interaction of the ribosome with GTP-bound translation factors. In Glaesserella parasuis serovar 5 (strain SH0165) (Haemophilus parasuis), this protein is Large ribosomal subunit protein uL10.